We begin with the raw amino-acid sequence, 104 residues long: Histone H4 (104 aa).

Residues Met-1–Lys-21 are disordered.

The protein belongs to the histone H4 family. As to quaternary structure, the nucleosome is a histone octamer containing two molecules each of H2A, H2B, H3 and H4 assembled in one H3-H4 heterotetramer and two H2A-H2B heterodimers. The octamer wraps approximately 147 bp of DNA.

It is found in the nucleus. It localises to the chromosome. Its function is as follows. Core component of nucleosome. Nucleosomes wrap and compact DNA into chromatin, limiting DNA accessibility to the cellular machineries which require DNA as a template. Histones thereby play a central role in transcription regulation, DNA repair, DNA replication and chromosomal stability. DNA accessibility is regulated via a complex set of post-translational modifications of histones, also called histone code, and nucleosome remodeling. The polypeptide is Histone H4 (Sterkiella nova (Ciliate)).